The chain runs to 434 residues: Serine hydroxymethyltransferase (434 aa).

Residue 120–122 coordinates (6S)-5,6,7,8-tetrahydrofolate; sequence GHI. At lysine 236 the chain carries N6-(pyridoxal phosphate)lysine. Glutamate 255 provides a ligand contact to (6S)-5,6,7,8-tetrahydrofolate.

Belongs to the SHMT family. In terms of assembly, homodimer. Requires pyridoxal 5'-phosphate as cofactor.

It localises to the cytoplasm. Its pathway is amino-acid biosynthesis; glycine biosynthesis; glycine from L-serine: step 1/1. Its function is as follows. Catalyzes the reversible interconversion of serine and glycine with a modified folate serving as the one-carbon carrier. Also exhibits a pteridine-independent aldolase activity toward beta-hydroxyamino acids, producing glycine and aldehydes, via a retro-aldol mechanism. This chain is Serine hydroxymethyltransferase, found in Korarchaeum cryptofilum (strain OPF8).